A 254-amino-acid polypeptide reads, in one-letter code: Short-chain dehydrogenase/reductase SDRA (254 aa).

15–39 (IVTASTQGIGFGITERFGLEGASVV) is a binding site for NADP(+). A substrate-binding site is contributed by S146. The active-site Proton acceptor is the Y159. Positions 252–254 (SRL) match the Microbody targeting signal motif.

Belongs to the short-chain dehydrogenases/reductases (SDR) family.

It is found in the peroxisome. Its function is as follows. Involved with IBR3 and IBR10 in the peroxisomal beta-oxidation of indole-3-butyric acid (IBA) to form indole-3-acetic acid (IAA), a biologically active auxin. May be responsible for catalyzing the dehydrogenation step in the conversion of IBA. May be involved in the peroxisomal activation of 2,4-dichlorophenoxybutyric acid (2,4-DB), a precursor of active auxins that inhibit root growth. The sequence is that of Short-chain dehydrogenase/reductase SDRA from Arabidopsis thaliana (Mouse-ear cress).